The chain runs to 452 residues: Tubulin alpha-8 chain (452 aa).

8 residues coordinate GTP: glutamine 15, glutamate 74, serine 143, glycine 147, threonine 148, threonine 182, asparagine 209, and asparagine 231. A Mg(2+)-binding site is contributed by glutamate 74. Glutamate 257 is a catalytic residue.

This sequence belongs to the tubulin family. In terms of assembly, dimer of alpha and beta chains. A typical microtubule is a hollow water-filled tube with an outer diameter of 25 nm and an inner diameter of 15 nM. Alpha-beta heterodimers associate head-to-tail to form protofilaments running lengthwise along the microtubule wall with the beta-tubulin subunit facing the microtubule plus end conferring a structural polarity. Microtubules usually have 13 protofilaments but different protofilament numbers can be found in some organisms and specialized cells. Mg(2+) serves as cofactor.

The protein resides in the cytoplasm. It is found in the cytoskeleton. It carries out the reaction GTP + H2O = GDP + phosphate + H(+). In terms of biological role, tubulin is the major constituent of microtubules, a cylinder consisting of laterally associated linear protofilaments composed of alpha- and beta-tubulin heterodimers. Microtubules grow by the addition of GTP-tubulin dimers to the microtubule end, where a stabilizing cap forms. Below the cap, tubulin dimers are in GDP-bound state, owing to GTPase activity of alpha-tubulin. The chain is Tubulin alpha-8 chain (tba-8) from Caenorhabditis elegans.